Here is a 356-residue protein sequence, read N- to C-terminus: 1-acyl-sn-glycerol-3-phosphate acyltransferase LPAT1, chloroplastic (356 aa).

The N-terminal 56 residues, 1–56 (MDVASARSISSHPSYYGKPICSSQSSLIRISRDKVCCFGRISNGMTSFTTSLHAVP), are a transit peptide targeting the chloroplast. The helical transmembrane segment at 127–147 (GIFFCVVAGISATFLIVLMII) threads the bilayer. Residues 202–207 (HQSFLD) carry the HXXXXD motif motif. A helical membrane pass occupies residues 224–244 (TGIFVIPIIGWAMSMMGVVPL).

The protein belongs to the 1-acyl-sn-glycerol-3-phosphate acyltransferase family. Widely expressed. Expressed at higher level in leaves. Expressed at lower level in silique walls compared to leaves.

The protein localises to the plastid. Its subcellular location is the chloroplast membrane. The catalysed reaction is a fatty acyl-[ACP] + a 1-acyl-sn-glycero-3-phosphate = a 1,2-diacyl-sn-glycero-3-phosphate + holo-[ACP]. It catalyses the reaction a 1-acyl-sn-glycero-3-phosphate + an acyl-CoA = a 1,2-diacyl-sn-glycero-3-phosphate + CoA. Its pathway is phospholipid metabolism; CDP-diacylglycerol biosynthesis; CDP-diacylglycerol from sn-glycerol 3-phosphate: step 2/3. Functionally, plastidial enzyme of the prokaryotic glycerol-3-phosphate pathway that converts lysophosphatidic acid (LPA) into phosphatidic acid by incorporating an acyl moiety at position sn-2. Utilizes palmitoyl-ACP (16:0-ACP) to produce phosphatidic acid containing a saturated group at position sn-2, which is characteristic of lipids synthesized by the prokaryotic pathway. In vitro, can use 16:0-CoA as acyl donor. Essential for embryo development during the transition from the globular to the heart stage when chloroplasts begin to form. In Arabidopsis thaliana (Mouse-ear cress), this protein is 1-acyl-sn-glycerol-3-phosphate acyltransferase LPAT1, chloroplastic.